The primary structure comprises 861 residues: Bifunctional uridylyltransferase/uridylyl-removing enzyme (861 aa).

Positions 1-321 (MKNDNRIIKN…VYHQKQKIIR (321 aa)) are uridylyltransferase. Residues 322 to 678 (LDDEFQLSNR…IMPHHSQGGT (357 aa)) are uridylyl-removing. In terms of domain architecture, HD spans 440 to 562 (VDQHTLFVIR…LPHARYLDYL (123 aa)). ACT domains lie at 679–760 (EVFI…AVSR) and 788–861 (QLFL…KSKY).

This sequence belongs to the GlnD family. The cofactor is Mg(2+).

It carries out the reaction [protein-PII]-L-tyrosine + UTP = [protein-PII]-uridylyl-L-tyrosine + diphosphate. The catalysed reaction is [protein-PII]-uridylyl-L-tyrosine + H2O = [protein-PII]-L-tyrosine + UMP + H(+). Its activity is regulated as follows. Uridylyltransferase (UTase) activity is inhibited by glutamine, while glutamine activates uridylyl-removing (UR) activity. Modifies, by uridylylation and deuridylylation, the PII regulatory proteins (GlnB and homologs), in response to the nitrogen status of the cell that GlnD senses through the glutamine level. Under low glutamine levels, catalyzes the conversion of the PII proteins and UTP to PII-UMP and PPi, while under higher glutamine levels, GlnD hydrolyzes PII-UMP to PII and UMP (deuridylylation). Thus, controls uridylylation state and activity of the PII proteins, and plays an important role in the regulation of nitrogen assimilation and metabolism. The polypeptide is Bifunctional uridylyltransferase/uridylyl-removing enzyme (Legionella pneumophila (strain Paris)).